Here is a 50-residue protein sequence, read N- to C-terminus: Large ribosomal subunit protein eL40 (50 aa).

It belongs to the eukaryotic ribosomal protein eL40 family.

This Aeropyrum pernix (strain ATCC 700893 / DSM 11879 / JCM 9820 / NBRC 100138 / K1) protein is Large ribosomal subunit protein eL40.